Consider the following 353-residue polypeptide: C-X-C chemokine receptor type 4 (353 aa).

An important for chemokine binding and signaling region spans residues 1–22; it reads MEELHIYPSDNYTEEDLGSGDY. At 1-39 the chain is on the extracellular side; that stretch reads MEELHIYPSDNYTEEDLGSGDYDSMKEPCFREENAHFNR. Y7 carries the post-translational modification Sulfotyrosine. N11 carries an N-linked (GlcNAc...) asparagine glycan. Y12 carries the post-translational modification Sulfotyrosine. S19 carries an O-linked (Xyl...) (chondroitin sulfate) serine glycan. Y22 bears the Sulfotyrosine mark. 2 disulfides stabilise this stretch: C29/C275 and C110/C187. Residues 40–64 form a helical membrane-spanning segment; it reads IFLPTVYSIIFLTGIVGNGLVILVM. Residues 65–78 are Cytoplasmic-facing; sequence GYQKKLRSMTDKYR. The helical transmembrane segment at 79-100 threads the bilayer; sequence LHLSVADLLFVLTLPFWAVEAV. The tract at residues 95-98 is chemokine binding; it reads WAVE. Over 101-111 the chain is Extracellular; that stretch reads ANWYFGNFLCK. Residues 112-131 traverse the membrane as a helical segment; it reads AVHVIYTVNLYSSVLILAFI. The segment at 114 to 118 is chemokine binding; that stretch reads HVIYT. Residues 132–155 are Cytoplasmic-facing; sequence SLDRYLAIVHATNSQRPRKLLAEK. The Important for signaling motif lies at 134–136; that stretch reads DRY. The segment at 136–148 is involved in dimerization; when bound to chemokine; sequence YLAIVHATNSQRP. A helical membrane pass occupies residues 156–175; sequence VVYVGVWIPALLLTIPDFIF. Over 176-196 the chain is Extracellular; the sequence is ANVREADDRYICDRFYPNDSW. The tract at residues 187–191 is chemokine binding, important for signaling; it reads CDRFY. Residues 192–211 form an involved in dimerization region; it reads PNDSWLVVFQFQHIMVGLIL. The helical transmembrane segment at 197–217 threads the bilayer; sequence LVVFQFQHIMVGLILPGIVIL. The Cytoplasmic segment spans residues 218–242; sequence SCYCIIISKLSHSKGYQKRKALKTT. The helical transmembrane segment at 243–262 threads the bilayer; sequence VILILAFFACWLPYYIGISI. Topologically, residues 263-283 are extracellular; the sequence is DSFILLEIIKQGCEFEKTVHK. Residues 267–269 form an involved in dimerization region; that stretch reads LLE. A helical transmembrane segment spans residues 284 to 303; the sequence is WISITEALAFFHCCLNPILY. Topologically, residues 304-353 are cytoplasmic; the sequence is AFLGAKFKTSAQHALTSVSRGSSLKILSKGKRGGHSSVSTESESSSFHSS. Phosphoserine is present on residues S320 and S322. Residues S325 and S326 each carry the phosphoserine; by PKC and GRK6 modification. The tract at residues 330–353 is disordered; the sequence is LSKGKRGGHSSVSTESESSSFHSS. A Phosphoserine; by GRK6 modification is found at S331. K332 is covalently cross-linked (Glycyl lysine isopeptide (Lys-Gly) (interchain with G-Cter in ubiquitin)). Over residues 338–353 the composition is skewed to low complexity; it reads HSSVSTESESSSFHSS. S340 is modified (phosphoserine; by GRK6). Phosphoserine occurs at positions 349 and 352.

Belongs to the G-protein coupled receptor 1 family. In terms of assembly, monomer. Can form homodimers. Interacts with CD164. Interacts with ARRB2; the interaction is dependent on the C-terminal phosphorylation of CXCR4 and allows activation of MAPK1 and MAPK3. Interacts with ARR3; the interaction is dependent on the C-terminal phosphorylation of CXCR4 and modulates calcium mobilization. Interacts with RNF113A; the interaction, enhanced by CXCL12, promotes CXCR4 ubiquitination and subsequent degradation. Interacts (via the cytoplasmic C-terminal) with ITCH (via the WW domains I and II); the interaction, enhanced by CXCL12, promotes CXCR4 ubiquitination and leads to its degradation. Interacts with extracellular ubiquitin. Interacts with DBN1; this interaction is enhanced by antigenic stimulation. Following LPS binding, may form a complex with GDF5, HSP90AA1 and HSPA8. In terms of processing, phosphorylated on agonist stimulation. Rapidly phosphorylated on serine and threonine residues in the C-terminal. Phosphorylation at Ser-325 and Ser-326 leads to recruitment of ITCH, ubiquitination and protein degradation. Ubiquitinated after ligand binding, leading to its degradation. Ubiquitinated by ITCH at the cell membrane on agonist stimulation. The ubiquitin-dependent mechanism, endosomal sorting complex required for transport (ESCRT), then targets CXCR4 for lysosomal degradation. This process is dependent also on prior Ser-/Thr-phosphorylation in the C-terminal of CXCR4. Also binding of ARRB1 to STAM negatively regulates CXCR4 sorting to lysosomes though modulating ubiquitination of SFR5S. Post-translationally, sulfation is required for efficient binding of CXCL12/SDF-1alpha and promotes its dimerization. In terms of processing, O- and N-glycosylated. N-glycosylation can mask coreceptor function. The O-glycosylation chondroitin sulfate attachment does not affect interaction with CXCL12/SDF-1alpha nor its coreceptor activity.

It localises to the cell membrane. It is found in the cell junction. The protein localises to the early endosome. Its subcellular location is the late endosome. The protein resides in the lysosome. Receptor for the C-X-C chemokine CXCL12/SDF-1 that transduces a signal by increasing intracellular calcium ion levels and enhancing MAPK1/MAPK3 activation. Involved in the AKT signaling cascade. Plays a role in regulation of cell migration, e.g. during wound healing. Acts as a receptor for extracellular ubiquitin; leading to enhanced intracellular calcium ions and reduced cellular cAMP levels. Binds bacterial lipopolysaccharide (LPS) et mediates LPS-induced inflammatory response, including TNF secretion by monocytes. Involved in hematopoiesis and in cardiac ventricular septum formation. Also plays an essential role in vascularization of the gastrointestinal tract, probably by regulating vascular branching and/or remodeling processes in endothelial cells. Involved in cerebellar development. In the CNS, could mediate hippocampal-neuron survival. The protein is C-X-C chemokine receptor type 4 (CXCR4) of Canis lupus familiaris (Dog).